The primary structure comprises 283 residues: Pantothenate synthetase (283 aa).

30–37 is an ATP binding site; it reads MGCLHEGH. H37 functions as the Proton donor in the catalytic mechanism. Residue Q61 participates in (R)-pantoate binding. Beta-alanine is bound at residue Q61. Position 147-150 (147-150) interacts with ATP; that stretch reads GQKD. A (R)-pantoate-binding site is contributed by Q153. ATP is bound by residues V176 and 184–187; that span reads KSSR.

Belongs to the pantothenate synthetase family. As to quaternary structure, homodimer.

It is found in the cytoplasm. The catalysed reaction is (R)-pantoate + beta-alanine + ATP = (R)-pantothenate + AMP + diphosphate + H(+). It participates in cofactor biosynthesis; (R)-pantothenate biosynthesis; (R)-pantothenate from (R)-pantoate and beta-alanine: step 1/1. Functionally, catalyzes the condensation of pantoate with beta-alanine in an ATP-dependent reaction via a pantoyl-adenylate intermediate. The chain is Pantothenate synthetase from Clostridium novyi (strain NT).